A 382-amino-acid chain; its full sequence is Lipid-A-disaccharide synthase (382 aa).

The protein belongs to the LpxB family.

The enzyme catalyses 2-N,3-O-bis[(3R)-3-hydroxytetradecanoyl]-alpha-D-glucosaminyl 1-phosphate + UDP-2-N,3-O-bis[(3R)-3-hydroxytetradecanoyl]-alpha-D-glucosamine = lipid A disaccharide (E. coli) + UDP + H(+). It catalyses the reaction a lipid X + a UDP-2-N,3-O-bis[(3R)-3-hydroxyacyl]-alpha-D-glucosamine = a lipid A disaccharide + UDP + H(+). Its pathway is glycolipid biosynthesis; lipid IV(A) biosynthesis; lipid IV(A) from (3R)-3-hydroxytetradecanoyl-[acyl-carrier-protein] and UDP-N-acetyl-alpha-D-glucosamine: step 5/6. Functionally, condensation of UDP-2,3-diacylglucosamine and 2,3-diacylglucosamine-1-phosphate to form lipid A disaccharide, a precursor of lipid A, a phosphorylated glycolipid that anchors the lipopolysaccharide to the outer membrane of the cell. This is Lipid-A-disaccharide synthase from Escherichia coli O17:K52:H18 (strain UMN026 / ExPEC).